Here is a 464-residue protein sequence, read N- to C-terminus: Olfactomedin (464 aa).

The first 16 residues, 1–16, serve as a signal peptide directing secretion; the sequence is MYICLLTLVLIHAAAA. Asparagine 21, asparagine 85, asparagine 143, asparagine 228, asparagine 279, and asparagine 383 each carry an N-linked (GlcNAc...) asparagine glycan. The Olfactomedin-like domain maps to 192–464; it reads SCQHQGLAHI…LLHYDIALKP (273 aa). An intrachain disulfide couples cysteine 193 to cysteine 394.

As to quaternary structure, oligomer; disulfide-linked. Most, if not all, of the six potential sites for N-glycosylation carry carbohydrate moieties of 8-10 sugar residues. Expressed exclusively in olfactory neuroepithelium.

It localises to the secreted. The protein localises to the extracellular space. Its function is as follows. May influence the maintenance, growth, or differentiation of chemosensory cilia on the apical dendrites of olfactory neurons. Major component of the extracellular matrix of the olfactory neuroepithelium. In Aquarana catesbeiana (American bullfrog), this protein is Olfactomedin.